A 1136-amino-acid chain; its full sequence is Unconventional myosin-Ib (1136 aa).

Residues 15-701 (IGVGDTVLLE…TLFQLEDLRK (687 aa)) form the Myosin motor domain. Position 60 is a phosphoserine (Ser60). 108–115 (GESGAGKT) provides a ligand contact to ATP. Lys287 is covalently cross-linked (Glycyl lysine isopeptide (Lys-Gly) (interchain with G-Cter in SUMO1); alternate). Lys287 is covalently cross-linked (Glycyl lysine isopeptide (Lys-Gly) (interchain with G-Cter in SUMO2); alternate). The actin-binding stretch occupies residues 592-599 (YIRCIKPN). 6 consecutive IQ domains span residues 704-729 (LEDL…LMKR), 730-750 (SQVV…YQQI), 750-778 (IKSS…HQKR), 780-807 (KEAA…DEAR), 808-837 (NKHA…EARR), and 837-866 (RKHA…ANAG). In terms of domain architecture, TH1 spans 952–1136 (KALYPSSVGQ…NNRLLEVAVP (185 aa)).

It belongs to the TRAFAC class myosin-kinesin ATPase superfamily. Myosin family.

In terms of biological role, motor protein that may participate in process critical to neuronal development and function such as cell migration, neurite outgrowth and vesicular transport. In Rattus norvegicus (Rat), this protein is Unconventional myosin-Ib (Myo1b).